The sequence spans 210 residues: MADS-box protein AeAP3-2 (210 aa).

Residues 1–36 (GGLLKKARELAILCDAQLGVIIFSSSGKMFEFSSPP) form the MADS-box domain. In terms of domain architecture, K-box spans 59–149 (NQQVYCEITR…YRVIQDHHAA (91 aa)).

As to expression, expressed exclusively in the carpel.

The protein resides in the nucleus. Probable transcription factor. The protein is MADS-box protein AeAP3-2 (AP3-2) of Asarum europaeum (Asarabacca).